We begin with the raw amino-acid sequence, 670 residues long: Sodium/glucose cotransporter 2 (670 aa).

At 1–20 the chain is on the extracellular side; that stretch reads MEGHVEEGSELGEQKVLIDN. A helical membrane pass occupies residues 21-42; sequence PADILVIAAYFLLVIGVGLWSM. Residues 43–61 are Cytoplasmic-facing; it reads FRTNRGTVGGYFLAGRSMV. Residues 62 to 83 traverse the membrane as a helical segment; sequence WWPVGASLFASNIGSGHFVGLA. Residues Ala71 and Ile74 each contribute to the Na(+) site. Residues 84-91 lie on the Extracellular side of the membrane; the sequence is GTGAASGL. A helical membrane pass occupies residues 92–112; sequence AVAGFEWNALFVVLLLGWLFV. Over 113 to 134 the chain is Cytoplasmic; the sequence is PVYLTAGVITMPQYLRKRFGGR. A helical transmembrane segment spans residues 135-164; sequence RIRLYLSVLSLFLYIFTKISVDMFSGAVFI. Residues 165–171 are Extracellular-facing; that stretch reads QQALGWN. The next 2 helical transmembrane spans lie at 172–193 and 194–215; these read IYASVIALLGITMIYTVTGGLA and ALMYTDTVQTFVILAGAFILTG. Over 216–273 the chain is Extracellular; it reads YAFHEVGGYSGLFDKYLGAVTSLTVSKDPAVGNISSTCYQPRPDSYHLLRDPVTGGLP. Asn248 carries an N-linked (GlcNAc...) asparagine glycan. 4 cysteine pairs are disulfide-bonded: Cys253–Cys509, Cys343–Cys349, Cys353–Cys359, and Cys515–Cys520. The helical transmembrane segment at 274–293 threads the bilayer; it reads WPALLLGLTIVSGWHWCSDQ. The Cytoplasmic portion of the chain corresponds to 294-307; that stretch reads VIVQRCLAGKNLTH. Residues 308–329 form a helical membrane-spanning segment; it reads IKAGCILCGYLKLMPMFLMVMP. Residues 330–373 lie on the Extracellular side of the membrane; it reads GMISRILYPDEVACVVPEVCKRVCGTEVGCSNIAYPRLVVKLMP. The helical transmembrane segment at 374–404 threads the bilayer; it reads NGLRGLMLAVMLAALMSSLASIFNSSSTLFT. The Na(+) site is built by Ala387, Ser390, and Ser391. The Cytoplasmic segment spans residues 405–422; it reads MDIYTRLRPRAGDRELLL. Residues 423-444 form a helical membrane-spanning segment; that stretch reads VGRLWVVFIVAVSVAWLPVVQA. Topologically, residues 445 to 449 are extracellular; sequence AQGGQ. Residues 450-475 form a helical membrane-spanning segment; that stretch reads LFDYIQSVSSYLAPPVSAVFVLALFV. The Cytoplasmic portion of the chain corresponds to 476-480; the sequence is PRVNE. A helical membrane pass occupies residues 481-503; the sequence is KGAFWGLIGGLLMGLARLIPEFF. The Extracellular segment spans residues 504–521; the sequence is FGTGSCVRPSACPAIFCR. A helical membrane pass occupies residues 522-545; the sequence is VHYLYFAIILFFCSGFLTLAISRC. The Cytoplasmic portion of the chain corresponds to 546-649; it reads TAPIPQKHLH…DISEDPSWAR (104 aa). Residues 650 to 668 traverse the membrane as a helical segment; the sequence is VVNLNALLMMTVAVFLWGF. The Extracellular segment spans residues 669 to 670; that stretch reads YA.

The protein belongs to the sodium:solute symporter (SSF) (TC 2.A.21) family. Forms a heterodimer (via TM13) with PDZK1IP1 (via N-terminal transmembrane helix); this interaction enhances SLC5A2 transporter activity. Glycosylated at a single site. Kidney, in proximal tubule S1 segments.

It is found in the apical cell membrane. It catalyses the reaction D-glucose(out) + Na(+)(out) = D-glucose(in) + Na(+)(in). Enhanced by the interaction with PDZK1IP1/MAP17. Electrogenic Na(+)-coupled sugar symporter that actively transports D-glucose at the plasma membrane, with a Na(+) to sugar coupling ratio of 1:1. Transporter activity is driven by a transmembrane Na(+) electrochemical gradient set by the Na(+)/K(+) pump. Unlike SLC5A1/SGLT1, requires the auxiliary protein PDZK1IP1/MAP17 for full transporter activity. Has a primary role in D-glucose reabsorption from glomerular filtrate across the brush border of the early proximal tubules of the kidney. The chain is Sodium/glucose cotransporter 2 (Slc5a2) from Rattus norvegicus (Rat).